Reading from the N-terminus, the 364-residue chain is UDP-N-acetylglucosamine--N-acetylmuramyl-(pentapeptide) pyrophosphoryl-undecaprenol N-acetylglucosamine transferase (364 aa).

UDP-N-acetyl-alpha-D-glucosamine-binding positions include Thr-19–Gly-21, Asn-131, Arg-167, Ser-195, Ile-250, and Gln-295.

It belongs to the glycosyltransferase 28 family. MurG subfamily.

The protein resides in the cell inner membrane. It catalyses the reaction di-trans,octa-cis-undecaprenyl diphospho-N-acetyl-alpha-D-muramoyl-L-alanyl-D-glutamyl-meso-2,6-diaminopimeloyl-D-alanyl-D-alanine + UDP-N-acetyl-alpha-D-glucosamine = di-trans,octa-cis-undecaprenyl diphospho-[N-acetyl-alpha-D-glucosaminyl-(1-&gt;4)]-N-acetyl-alpha-D-muramoyl-L-alanyl-D-glutamyl-meso-2,6-diaminopimeloyl-D-alanyl-D-alanine + UDP + H(+). Its pathway is cell wall biogenesis; peptidoglycan biosynthesis. Cell wall formation. Catalyzes the transfer of a GlcNAc subunit on undecaprenyl-pyrophosphoryl-MurNAc-pentapeptide (lipid intermediate I) to form undecaprenyl-pyrophosphoryl-MurNAc-(pentapeptide)GlcNAc (lipid intermediate II). In Xylella fastidiosa (strain Temecula1 / ATCC 700964), this protein is UDP-N-acetylglucosamine--N-acetylmuramyl-(pentapeptide) pyrophosphoryl-undecaprenol N-acetylglucosamine transferase.